The sequence spans 353 residues: MTIALGKFTKDENDLFDIMDDWLRRDRFVFVGWSGLLVFPCAYFALGGWFTGTTFVTSWYTHGWASSYLEGCNFLTAAVSTPANSLAHSLLLLWGPEAQGDFTRWCQLGGFWTFVALHGAFGLIGFMLRQFELARSVQLRPYNAIAFSAPIAVFVSVFLIYPLGQSGWFFAPSFGVAAIFRFILFFQGFHNWTLNPFHMMGVAGVLGAALLCAIHGATVENTLFEDGDGANTFRAFNPTQAEETYSMVTANRFWSQIFGVAFSNKRWLHFFMLFVPVTGLWMSALGVVGLALNLRAYDFVSQEIRAAEDPEFETFYTKNILLNEGIRAWMAAQDQPHENLIFPEEVLPRGNAL.

Thr-2 carries the post-translational modification N-acetylthreonine. Thr-2 carries the post-translational modification Phosphothreonine. The chain crosses the membrane as a helical span at residues 41 to 61; sequence CAYFALGGWFTGTTFVTSWYT. His-118 is a chlorophyll a binding site. Residues 125 to 141 form a helical membrane-spanning segment; the sequence is GFMLRQFELARSVQLRP. Pheophytin a contacts are provided by Gln-130 and Asn-143. A helical membrane pass occupies residues 153-166; sequence VFVSVFLIYPLGQS. His-198 contacts chlorophyll a. A helical membrane pass occupies residues 208 to 228; it reads AALLCAIHGATVENTLFEDGD. A plastoquinone-binding residues include His-215 and Phe-262. His-215 contributes to the Fe cation binding site. His-269 lines the Fe cation pocket. Residues 279–295 traverse the membrane as a helical segment; that stretch reads GLWMSALGVVGLALNLR.

Belongs to the reaction center PufL/M/PsbA/D family. In terms of assembly, PSII is composed of 1 copy each of membrane proteins PsbA, PsbB, PsbC, PsbD, PsbE, PsbF, PsbH, PsbI, PsbJ, PsbK, PsbL, PsbM, PsbT, PsbX, PsbY, PsbZ, Psb30/Ycf12, at least 3 peripheral proteins of the oxygen-evolving complex and a large number of cofactors. It forms dimeric complexes. Requires The D1/D2 heterodimer binds P680, chlorophylls that are the primary electron donor of PSII, and subsequent electron acceptors. It shares a non-heme iron and each subunit binds pheophytin, quinone, additional chlorophylls, carotenoids and lipids. There is also a Cl(-1) ion associated with D1 and D2, which is required for oxygen evolution. The PSII complex binds additional chlorophylls, carotenoids and specific lipids. as cofactor.

Its subcellular location is the plastid. The protein localises to the chloroplast thylakoid membrane. The enzyme catalyses 2 a plastoquinone + 4 hnu + 2 H2O = 2 a plastoquinol + O2. Photosystem II (PSII) is a light-driven water:plastoquinone oxidoreductase that uses light energy to abstract electrons from H(2)O, generating O(2) and a proton gradient subsequently used for ATP formation. It consists of a core antenna complex that captures photons, and an electron transfer chain that converts photonic excitation into a charge separation. The D1/D2 (PsbA/PsbD) reaction center heterodimer binds P680, the primary electron donor of PSII as well as several subsequent electron acceptors. D2 is needed for assembly of a stable PSII complex. This Populus deltoides (Eastern poplar) protein is Photosystem II D2 protein.